The sequence spans 680 residues: DNA-directed RNA polymerase subunit beta' (680 aa).

Residues Cys69, Cys71, Cys87, and Cys90 each contribute to the Zn(2+) site. Positions 489, 491, and 493 each coordinate Mg(2+).

The protein belongs to the RNA polymerase beta' chain family. RpoC1 subfamily. As to quaternary structure, in plastids the minimal PEP RNA polymerase catalytic core is composed of four subunits: alpha, beta, beta', and beta''. When a (nuclear-encoded) sigma factor is associated with the core the holoenzyme is formed, which can initiate transcription. The cofactor is Mg(2+). Zn(2+) serves as cofactor.

The protein resides in the plastid. It localises to the chloroplast. It catalyses the reaction RNA(n) + a ribonucleoside 5'-triphosphate = RNA(n+1) + diphosphate. In terms of biological role, DNA-dependent RNA polymerase catalyzes the transcription of DNA into RNA using the four ribonucleoside triphosphates as substrates. The protein is DNA-directed RNA polymerase subunit beta' of Citrus sinensis (Sweet orange).